A 292-amino-acid chain; its full sequence is uncharacterized protein (292 aa).

The 58-residue stretch at 1–58 folds into the HTH lysR-type domain; the sequence is MEWEQLEYFQTLARMQHVTKAAKSLSITQPALSRSIARLENHLGVPLFDRQGRSISLN. Positions 18–37 form a DNA-binding region, H-T-H motif; it reads VTKAAKSLSITQPALSRSIA.

This sequence belongs to the LysR transcriptional regulatory family.

This is an uncharacterized protein from Bacillus subtilis (strain 168).